We begin with the raw amino-acid sequence, 737 residues long: Catalase-peroxidase (737 aa).

The tryptophyl-tyrosyl-methioninium (Trp-Tyr) (with M-251) cross-link spans 102-225 (WHSAGTYRTG…LGAVQMGLIY (124 aa)). The active-site Proton acceptor is the His103. Positions 225–251 (YVNPEGPNGKPDPLAAAHDIRETFARM) form a cross-link, tryptophyl-tyrosyl-methioninium (Tyr-Met) (with W-102). His266 provides a ligand contact to heme b.

Belongs to the peroxidase family. Peroxidase/catalase subfamily. As to quaternary structure, homodimer or homotetramer. Heme b is required as a cofactor. In terms of processing, formation of the three residue Trp-Tyr-Met cross-link is important for the catalase, but not the peroxidase activity of the enzyme.

The catalysed reaction is H2O2 + AH2 = A + 2 H2O. It catalyses the reaction 2 H2O2 = O2 + 2 H2O. Its function is as follows. Bifunctional enzyme with both catalase and broad-spectrum peroxidase activity. The chain is Catalase-peroxidase from Caulobacter sp. (strain K31).